Here is a 131-residue protein sequence, read N- to C-terminus: Small ribosomal subunit protein bS6 (131 aa).

The segment at 98 to 131 (EASPMVKAKDERRERREDFANETADDSEAGDSEE) is disordered. Over residues 104-116 (KAKDERRERREDF) the composition is skewed to basic and acidic residues. Over residues 120 to 131 (TADDSEAGDSEE) the composition is skewed to acidic residues.

Belongs to the bacterial ribosomal protein bS6 family.

Its function is as follows. Binds together with bS18 to 16S ribosomal RNA. The chain is Small ribosomal subunit protein bS6 from Klebsiella pneumoniae (strain 342).